The sequence spans 407 residues: Actinorhodin polyketide putative beta-ketoacyl synthase 2 (407 aa).

The region spanning 1-402 is the Ketosynthase family 3 (KS3) domain; sequence MSVLITGVGV…GFNSAAVLRR (402 aa).

It belongs to the thiolase-like superfamily. Beta-ketoacyl-ACP synthases family.

This Streptomyces coelicolor (strain ATCC BAA-471 / A3(2) / M145) protein is Actinorhodin polyketide putative beta-ketoacyl synthase 2.